We begin with the raw amino-acid sequence, 275 residues long: Large ribosomal subunit protein uL2 (275 aa).

The interval 218-275 is disordered; that stretch reads RPQTRGSAMNPIDHPHGGGEGKTNSGRHPVSPWGMPTKGYKTRKKKASDKLIISKRKK. Positions 257-275 are enriched in basic residues; that stretch reads YKTRKKKASDKLIISKRKK.

Belongs to the universal ribosomal protein uL2 family. As to quaternary structure, part of the 50S ribosomal subunit. Forms a bridge to the 30S subunit in the 70S ribosome.

Its function is as follows. One of the primary rRNA binding proteins. Required for association of the 30S and 50S subunits to form the 70S ribosome, for tRNA binding and peptide bond formation. It has been suggested to have peptidyltransferase activity; this is somewhat controversial. Makes several contacts with the 16S rRNA in the 70S ribosome. The protein is Large ribosomal subunit protein uL2 of Sulfurovum sp. (strain NBC37-1).